Consider the following 88-residue polypeptide: PTS system cellobiose-specific EIIB component (88 aa).

The PTS EIIB type-3 domain maps to 3 to 88 (KKRIYLFCSA…IDTLLYGKVD (86 aa)). Catalysis depends on C10, which acts as the Phosphocysteine intermediate. C10 is modified (phosphocysteine; by EIIA).

The protein localises to the cytoplasm. The enzyme catalyses D-cellobiose(out) + N(pros)-phospho-L-histidyl-[protein] = 6-phospho-beta-D-glucosyl-(1-&gt;4)-D-glucose(in) + L-histidyl-[protein]. In terms of biological role, the phosphoenolpyruvate-dependent sugar phosphotransferase system (sugar PTS), a major carbohydrate active transport system, catalyzes the phosphorylation of incoming sugar substrates concomitantly with their translocation across the cell membrane. The enzyme II CelABD PTS system is involved in cellobiose transport. This chain is PTS system cellobiose-specific EIIB component, found in Aeromonas hydrophila.